A 265-amino-acid polypeptide reads, in one-letter code: Apolipoprotein A-I (265 aa).

An N-terminal signal peptide occupies residues 1–18 (MKAVVLTLAVLFLTGSQA). 2 consecutive repeat copies span residues 67–88 (LKLLDNWDSLGSTFTKVREQLG) and 89–110 (PVTQEFWDNLEKETEALRQEMS). The interval 67–265 (LKLLDNWDSL…DEASKKLNAQ (199 aa)) is 10 X approximate tandem repeats. Residue M109 is modified to Methionine sulfoxide. Residues 111 to 121 (KDLEEVKKKVQ) form a 3; half-length repeat. A run of 5 repeats spans residues 122 to 142 (PYLDDFQNKWQEEMETYRQKM), 144 to 165 (PLGAEFREGARQKVQELQEKLS), 166 to 187 (PLAEELRDRLRAHVEALRQHVA), 188 to 209 (PYSDDLRQRMAARFEALKEGGG), and 210 to 230 (SLAEYQAKAQEQLKALGEKAK). M135 is modified (methionine sulfoxide). One copy of the 9; half-length repeat lies at 231-241 (PALEDLRQGLL). Copy 10 of the repeat occupies 242-265 (PVLENLKVSILAAIDEASKKLNAQ).

This sequence belongs to the apolipoprotein A1/A4/E family. In terms of assembly, homodimer. Interacts with APOA1BP and CLU. Component of a sperm activating protein complex (SPAP), consisting of APOA1, an immunoglobulin heavy chain, an immunoglobulin light chain and albumin. Interacts with NDRG1. Interacts with SCGB3A2. Interacts with NAXE and YJEFN3. Glycosylated. In terms of processing, palmitoylated. Post-translationally, phosphorylation sites are present in the extracellular medium. Major protein of plasma HDL, also found in chylomicrons. Synthesized predominantly in the intestine and the liver.

It is found in the secreted. Its function is as follows. Participates in the reverse transport of cholesterol from tissues to the liver for excretion by promoting cholesterol efflux from tissues and by acting as a cofactor for the lecithin cholesterol acyltransferase (LCAT). As part of the SPAP complex, activates spermatozoa motility. The protein is Apolipoprotein A-I (APOA1) of Sus scrofa (Pig).